Here is a 151-residue protein sequence, read N- to C-terminus: Lipoprotein signal peptidase (151 aa).

The next 3 membrane-spanning stretches (helical) occupy residues 3 to 23, 59 to 79, and 85 to 107; these read LYII…GWIV, WFFY…FYTS, and LYRI…RLHL. Residues Asp-112 and Asp-128 contribute to the active site. Residues 123–143 traverse the membrane as a helical segment; that stretch reads IFNVADTALTCGVICVFIAIL.

Belongs to the peptidase A8 family.

It is found in the cell membrane. It carries out the reaction Release of signal peptides from bacterial membrane prolipoproteins. Hydrolyzes -Xaa-Yaa-Zaa-|-(S,diacylglyceryl)Cys-, in which Xaa is hydrophobic (preferably Leu), and Yaa (Ala or Ser) and Zaa (Gly or Ala) have small, neutral side chains.. It participates in protein modification; lipoprotein biosynthesis (signal peptide cleavage). This protein specifically catalyzes the removal of signal peptides from prolipoproteins. The sequence is that of Lipoprotein signal peptidase from Latilactobacillus sakei subsp. sakei (strain 23K) (Lactobacillus sakei subsp. sakei).